We begin with the raw amino-acid sequence, 204 residues long: High frequency lysogenization protein HflD homolog (204 aa).

Belongs to the HflD family.

It localises to the cytoplasm. Its subcellular location is the cell inner membrane. The polypeptide is High frequency lysogenization protein HflD homolog (Actinobacillus succinogenes (strain ATCC 55618 / DSM 22257 / CCUG 43843 / 130Z)).